The primary structure comprises 645 residues: Rab11 family-interacting protein 1 (645 aa).

Residues 1–128 (MSLAASAGRG…DQGRRKKQWY (128 aa)) form the C2 domain. Positions 171–187 (PFGKLKDKIKGKNKDSA) are enriched in basic and acidic residues. The segment at 171 to 215 (PFGKLKDKIKGKNKDSASDTASAIVPSVTPSVDSDDESFSKDKKK) is disordered. 4 positions are modified to phosphoserine: Ser186, Ser204, Ser208, and Ser236. Residues 259–296 (WDDDAHEDESSSASDVMSHKRTSSTDQQPNQSNFSLPK) are disordered. The span at 282–293 (STDQQPNQSNFS) shows a compositional bias: polar residues. Ser301, Ser316, Ser340, Ser342, Ser344, Ser346, Ser357, Ser358, and Ser383 each carry phosphoserine. The disordered stretch occupies residues 330 to 545 (PEARSEIRES…PRPHPVKPMN (216 aa)). 2 stretches are compositionally biased toward basic and acidic residues: residues 378-391 (SDRR…KDSM) and 418-432 (AARE…ESKK). A Phosphoserine modification is found at Ser434. Residues 459 to 487 (SEKEKERKGALVEAQLREEDLMRRPEKDA) are compositionally biased toward basic and acidic residues. The region spanning 573–635 (KKYQPSDPAF…EETPNILRVP (63 aa)) is the FIP-RBD domain. Residues 581–645 (AFAYAQLTHD…AQMGKKAGKM (65 aa)) are necessary for interaction with RAB4A and RAB11A, subcellular location and endosomal recycling.

Homooligomer. Interacts with RAB11A, RAB11B, RAB25, RAB4A and RAB14.

Its subcellular location is the recycling endosome. The protein localises to the cytoplasmic vesicle. A Rab11 effector protein involved in the endosomal recycling process. Also involved in controlling membrane trafficking along the phagocytic pathway and in phagocytosis. Interaction with RAB14 may function in the process of neurite formation. The chain is Rab11 family-interacting protein 1 (Rab11fip1) from Mus musculus (Mouse).